The chain runs to 573 residues: Probable zinc metallopeptidase EGY3, chloroplastic (573 aa).

A chloroplast-targeting transit peptide spans 1-50; the sequence is MASLFVSTPSSSLTLKSCHSLHLRRFDRAEFSNFGKASVNQTTRSRHSLR. Residues 38–105 are disordered; that stretch reads SVNQTTRSRH…EKKSKQQEMD (68 aa). Composition is skewed to basic and acidic residues over residues 52-62 and 96-105; these read SAEDDRVREPV and EKKSKQQEMD. Residues 122–185 adopt a coiled-coil conformation; it reads EAAIKLEKTR…KALDLNKLKS (64 aa). The next 7 membrane-spanning stretches (helical) occupy residues 274–294, 305–325, 376–396, 414–434, 441–461, 493–513, and 536–556; these read VSAI…SGFF, IANV…SEIA, ASAY…DGSF, PLLS…GNVL, VGVP…VTSL, LLLG…GLFA, and FAWG…NSGG.

It belongs to the peptidase M50B family.

It is found in the plastid. Its subcellular location is the chloroplast membrane. Functionally, probable membrane-associated metalloprotease that may be involved in chloroplast development. This Arabidopsis thaliana (Mouse-ear cress) protein is Probable zinc metallopeptidase EGY3, chloroplastic (EGY3).